The chain runs to 397 residues: Putative galactokinase (397 aa).

S78 provides a ligand contact to ATP. The active-site Proton acceptor is the D182.

It belongs to the GHMP kinase family. GalK subfamily.

The protein localises to the cytoplasm. It carries out the reaction alpha-D-galactose + ATP = alpha-D-galactose 1-phosphate + ADP + H(+). It functions in the pathway carbohydrate metabolism; galactose metabolism. In terms of biological role, catalyzes the transfer of the gamma-phosphate of ATP to D-galactose to form alpha-D-galactose-1-phosphate (Gal-1-P). The chain is Putative galactokinase (galK) from Treponema pallidum (strain Nichols).